The primary structure comprises 173 residues: Cyclic pyranopterin monophosphate synthase (173 aa).

Substrate-binding positions include 75–77 and 117–118; these read MCH and ME. The active site involves aspartate 132. Residues 152–173 are disordered; sequence SGGKSGHYQRENSSVGGFANEQ. Positions 162–173 are enriched in polar residues; that stretch reads ENSSVGGFANEQ.

The protein belongs to the MoaC family. Homohexamer; trimer of dimers.

It carries out the reaction (8S)-3',8-cyclo-7,8-dihydroguanosine 5'-triphosphate = cyclic pyranopterin phosphate + diphosphate. It functions in the pathway cofactor biosynthesis; molybdopterin biosynthesis. In terms of biological role, catalyzes the conversion of (8S)-3',8-cyclo-7,8-dihydroguanosine 5'-triphosphate to cyclic pyranopterin monophosphate (cPMP). This is Cyclic pyranopterin monophosphate synthase from Geobacillus sp. (strain WCH70).